The sequence spans 651 residues: Probable potassium transport system protein Kup (651 aa).

Helical transmembrane passes span 41 to 61 (LVLGALGVVYGDIGTSPIYAF), 82 to 102 (VVSLIFWALTLVVTVKYVLFV), 130 to 150 (LILGVGICGAALFFGDAVITP), 163 to 183 (IVAPNLTPFVVPATVVILVTL), 194 to 214 (VAIVFGPIMALWFVALGASGL), 235 to 255 (FLTVSPAVAFVTVGAVFLAMT), 276 to 296 (WLWIVFPCLLLNYFGQAAFIL), 309 to 329 (MIPSFALWPMVLLATAATVIA), 366 to 386 (IYIPRVNLLLGLAVVILVLGF), 395 to 415 (AYGIAVTGNMLVTTVLLYIVM), 426 to 446 (ALPIILGFLVIDMLFFSANII), and 450 to 470 (EGGWASIGIATVLVLIMWTWV).

The protein belongs to the HAK/KUP transporter (TC 2.A.72) family.

The protein resides in the cell inner membrane. It carries out the reaction K(+)(in) + H(+)(in) = K(+)(out) + H(+)(out). Functionally, transport of potassium into the cell. Likely operates as a K(+):H(+) symporter. The sequence is that of Probable potassium transport system protein Kup from Brucella melitensis biotype 1 (strain ATCC 23456 / CCUG 17765 / NCTC 10094 / 16M).